A 471-amino-acid chain; its full sequence is Tigger transposable element-derived protein 3 (471 aa).

An HTH psq-type domain is found at 3-55 (LSSKKKLHALSLAEKIQVLELLDESKMSQSEVARRFQVSQPQISRICKNKEKL). 2 DNA-binding regions (H-T-H motif) span residues 31-51 (QSEV…ICKN) and 100-130 (PMLL…WKRR). One can recognise an HTH CENPB-type domain in the interval 67-137 (ERKRKRESKY…KRRNNVGFGA (71 aa)). The region spanning 167–360 (FSPEDVFGCA…VPPQLIFSSF (194 aa)) is the DDE-1 domain.

The protein belongs to the tigger transposable element derived protein family.

It is found in the nucleus. This is Tigger transposable element-derived protein 3 (TIGD3) from Homo sapiens (Human).